The primary structure comprises 342 residues: Phosphate acyltransferase (342 aa).

Belongs to the PlsX family. As to quaternary structure, homodimer. Probably interacts with PlsY.

The protein localises to the cytoplasm. The enzyme catalyses a fatty acyl-[ACP] + phosphate = an acyl phosphate + holo-[ACP]. It functions in the pathway lipid metabolism; phospholipid metabolism. Functionally, catalyzes the reversible formation of acyl-phosphate (acyl-PO(4)) from acyl-[acyl-carrier-protein] (acyl-ACP). This enzyme utilizes acyl-ACP as fatty acyl donor, but not acyl-CoA. The chain is Phosphate acyltransferase from Shewanella woodyi (strain ATCC 51908 / MS32).